The primary structure comprises 216 residues: Ribonuclease T (216 aa).

In terms of domain architecture, Exonuclease spans 28-202; sequence VVVDVETGGF…YDTEQTARLF (175 aa). Mg(2+) is bound by residues aspartate 31, glutamate 33, histidine 189, and aspartate 194. The active-site Proton donor/acceptor is the histidine 189.

The protein belongs to the RNase T family. Homodimer. The cofactor is Mg(2+).

Its function is as follows. Trims short 3' overhangs of a variety of RNA species, leaving a one or two nucleotide 3' overhang. Responsible for the end-turnover of tRNA: specifically removes the terminal AMP residue from uncharged tRNA (tRNA-C-C-A). Also appears to be involved in tRNA biosynthesis. The protein is Ribonuclease T of Xanthomonas campestris pv. campestris (strain 8004).